Reading from the N-terminus, the 103-residue chain is Large ribosomal subunit protein bL21 (103 aa).

It belongs to the bacterial ribosomal protein bL21 family. In terms of assembly, part of the 50S ribosomal subunit. Contacts protein L20.

Its function is as follows. This protein binds to 23S rRNA in the presence of protein L20. The protein is Large ribosomal subunit protein bL21 of Pseudomonas fluorescens (strain Pf0-1).